A 148-amino-acid polypeptide reads, in one-letter code: UPAR/Ly6 domain-containing protein bero (148 aa).

The signal sequence occupies residues 1–23 (MVSALKCSLAVAVMISLACSAYA). 5 disulfide bridges follow: cysteine 26–cysteine 72, cysteine 29–cysteine 37, cysteine 51–cysteine 90, cysteine 102–cysteine 116, and cysteine 119–cysteine 124. N-linked (GlcNAc...) asparagine glycosylation occurs at asparagine 68. N-linked (GlcNAc...) asparagine glycosylation is present at asparagine 125. A lipid anchor (GPI-anchor amidated asparagine) is attached at asparagine 125. A propeptide spans 126 to 148 (GSSSLAPIAGAILLFFGVARLLA) (removed in mature form). Residues 128–148 (SSLAPIAGAILLFFGVARLLA) traverse the membrane as a helical segment.

It belongs to the quiver family.

It localises to the cell membrane. Its subcellular location is the membrane. The protein resides in the perikaryon. The protein localises to the cell projection. It is found in the neuron projection. Its function is as follows. Necessary for the maintenance of persistent fluctuating activities and suppression of acute evoked activities in abdominal leucokinin-producing (ABLK) neurons to negatively regulate neuron excitability involved in nociceptive (perception of pain) behavioral responses. The chain is UPAR/Ly6 domain-containing protein bero from Drosophila melanogaster (Fruit fly).